We begin with the raw amino-acid sequence, 86 residues long: Small ribosomal subunit protein uS17 (86 aa).

This sequence belongs to the universal ribosomal protein uS17 family. Part of the 30S ribosomal subunit.

Its function is as follows. One of the primary rRNA binding proteins, it binds specifically to the 5'-end of 16S ribosomal RNA. The protein is Small ribosomal subunit protein uS17 of Bifidobacterium longum (strain DJO10A).